Consider the following 490-residue polypeptide: Probable cytochrome P450 308a1 (490 aa).

Cysteine 431 is a heme binding site.

It belongs to the cytochrome P450 family. It depends on heme as a cofactor.

The protein localises to the endoplasmic reticulum membrane. It is found in the microsome membrane. May be involved in the metabolism of insect hormones and in the breakdown of synthetic insecticides. This Drosophila melanogaster (Fruit fly) protein is Probable cytochrome P450 308a1 (Cyp308a1).